The sequence spans 89 residues: Small ribosomal subunit protein uS15 (89 aa).

Belongs to the universal ribosomal protein uS15 family. Part of the 30S ribosomal subunit. Forms a bridge to the 50S subunit in the 70S ribosome, contacting the 23S rRNA.

Functionally, one of the primary rRNA binding proteins, it binds directly to 16S rRNA where it helps nucleate assembly of the platform of the 30S subunit by binding and bridging several RNA helices of the 16S rRNA. Forms an intersubunit bridge (bridge B4) with the 23S rRNA of the 50S subunit in the ribosome. The chain is Small ribosomal subunit protein uS15 from Mannheimia succiniciproducens (strain KCTC 0769BP / MBEL55E).